The primary structure comprises 243 residues: Carboxy-S-adenosyl-L-methionine synthase (243 aa).

Residues Tyr40, Gly65–Ser67, Asp90–Asn91, Asp118–Ile119, Asn133, and Arg200 each bind S-adenosyl-L-methionine.

Belongs to the class I-like SAM-binding methyltransferase superfamily. Cx-SAM synthase family. As to quaternary structure, homodimer.

The enzyme catalyses prephenate + S-adenosyl-L-methionine = carboxy-S-adenosyl-L-methionine + 3-phenylpyruvate + H2O. Its function is as follows. Catalyzes the conversion of S-adenosyl-L-methionine (SAM) to carboxy-S-adenosyl-L-methionine (Cx-SAM). The protein is Carboxy-S-adenosyl-L-methionine synthase of Shewanella baltica (strain OS155 / ATCC BAA-1091).